The sequence spans 311 residues: Olfactory receptor 2A5 (311 aa).

The Extracellular segment spans residues 1–24 (MTKNQTWVTEFILLGFPLSLRIQM). N-linked (GlcNAc...) asparagine glycosylation is present at asparagine 4. Residues 25–48 (LLSGLFSLLYVFTLLGNGAILGLI) traverse the membrane as a helical segment. Topologically, residues 49–56 (WLDSRLHT) are cytoplasmic. Residues 57–78 (PMYFFLSHLAIIDISYASNNVP) form a helical membrane-spanning segment. Topologically, residues 79-100 (KMLTNLGLNKRKTISFVPCTMQ) are extracellular. An intrachain disulfide couples cysteine 97 to cysteine 189. The chain crosses the membrane as a helical span at residues 101 to 120 (TFLYMAFAHTECLILVMMSY). The Cytoplasmic segment spans residues 121 to 139 (DRYMAICHPLQYSVIMRWG). Residues 140–158 (VCTVLAVTSWACGSLLALV) form a helical membrane-spanning segment. Topologically, residues 159-196 (HVVLILRLPFCGPHEINHFFCEILSVLKLACADTWLNQ) are extracellular. Residues 197–219 (VVIFAASVFILVGPLCLVLVSYS) form a helical membrane-spanning segment. Topologically, residues 220-236 (RILAAILRIQSGEGRRK) are cytoplasmic. The chain crosses the membrane as a helical span at residues 237 to 259 (AFSTCSSHLCMVGLFFGSAIVMY). Residues 260-272 (MAPKSRHPEEQQK) lie on the Extracellular side of the membrane. Residues 273–292 (VLSLFYSLFNPMLNPLIYSL) form a helical membrane-spanning segment. Residues 293-311 (RNAEVKGALKRVLWKQRSK) lie on the Cytoplasmic side of the membrane.

Belongs to the G-protein coupled receptor 1 family.

It is found in the cell membrane. In terms of biological role, odorant receptor. This chain is Olfactory receptor 2A5 (OR2A5), found in Homo sapiens (Human).